A 345-amino-acid polypeptide reads, in one-letter code: NADPH dehydrogenase (345 aa).

23 to 26 (SPMC) is an FMN binding site. Position 28 (Y28) interacts with substrate. FMN-binding residues include A60 and Q102. A substrate-binding site is contributed by 164–167 (HGAH). Residues R215 and 307-308 (GR) contribute to the FMN site.

Belongs to the NADH:flavin oxidoreductase/NADH oxidase family. NamA subfamily. As to quaternary structure, homotetramer. FMN is required as a cofactor.

It carries out the reaction A + NADPH + H(+) = AH2 + NADP(+). Its function is as follows. Catalyzes the reduction of the double bond of an array of alpha,beta-unsaturated aldehydes and ketones. It also reduces the nitro group of nitroester and nitroaromatic compounds. It could have a role in detoxification processes. The protein is NADPH dehydrogenase of Bacillus cereus (strain B4264).